Consider the following 482-residue polypeptide: Bifunctional protein GlmU (482 aa).

The interval 1 to 241 (MTASTEAAVV…SALVTGVNDR (241 aa)) is pyrophosphorylase. UDP-N-acetyl-alpha-D-glucosamine is bound by residues 12 to 15 (LAAG), Lys26, Gln83, 88 to 89 (GT), 112 to 114 (SGD), Gly151, Glu166, Asn181, and Asn239. Asp114 provides a ligand contact to Mg(2+). Position 239 (Asn239) interacts with Mg(2+). A linker region spans residues 242 to 262 (VQLSDLGKVLNRRIVAAHQRA). The segment at 263–482 (GVTIIDPGST…AARKALGDES (220 aa)) is N-acetyltransferase. The UDP-N-acetyl-alpha-D-glucosamine site is built by Arg344 and Lys362. The Proton acceptor role is filled by His374. The UDP-N-acetyl-alpha-D-glucosamine site is built by Tyr377 and Asn388. Residues Ala391, 397–398 (NY), Ser416, and Ala434 each bind acetyl-CoA. The disordered stretch occupies residues 463 to 482 (KKRPGSAADKAARKALGDES). The span at 472–482 (KAARKALGDES) shows a compositional bias: basic and acidic residues.

It in the N-terminal section; belongs to the N-acetylglucosamine-1-phosphate uridyltransferase family. The protein in the C-terminal section; belongs to the transferase hexapeptide repeat family. In terms of assembly, homotrimer. Requires Mg(2+) as cofactor.

It is found in the cytoplasm. It carries out the reaction alpha-D-glucosamine 1-phosphate + acetyl-CoA = N-acetyl-alpha-D-glucosamine 1-phosphate + CoA + H(+). The enzyme catalyses N-acetyl-alpha-D-glucosamine 1-phosphate + UTP + H(+) = UDP-N-acetyl-alpha-D-glucosamine + diphosphate. It functions in the pathway nucleotide-sugar biosynthesis; UDP-N-acetyl-alpha-D-glucosamine biosynthesis; N-acetyl-alpha-D-glucosamine 1-phosphate from alpha-D-glucosamine 6-phosphate (route II): step 2/2. The protein operates within nucleotide-sugar biosynthesis; UDP-N-acetyl-alpha-D-glucosamine biosynthesis; UDP-N-acetyl-alpha-D-glucosamine from N-acetyl-alpha-D-glucosamine 1-phosphate: step 1/1. It participates in bacterial outer membrane biogenesis; LPS lipid A biosynthesis. Its function is as follows. Catalyzes the last two sequential reactions in the de novo biosynthetic pathway for UDP-N-acetylglucosamine (UDP-GlcNAc). The C-terminal domain catalyzes the transfer of acetyl group from acetyl coenzyme A to glucosamine-1-phosphate (GlcN-1-P) to produce N-acetylglucosamine-1-phosphate (GlcNAc-1-P), which is converted into UDP-GlcNAc by the transfer of uridine 5-monophosphate (from uridine 5-triphosphate), a reaction catalyzed by the N-terminal domain. This chain is Bifunctional protein GlmU, found in Mycolicibacterium smegmatis (strain ATCC 700084 / mc(2)155) (Mycobacterium smegmatis).